The sequence spans 430 residues: Histidinol dehydrogenase (430 aa).

Substrate is bound by residues S237, Q259, and H262. The Zn(2+) site is built by Q259 and H262. Active-site proton acceptor residues include E327 and H328. H328, D361, E415, and H420 together coordinate substrate. A Zn(2+)-binding site is contributed by D361. H420 contributes to the Zn(2+) binding site.

Belongs to the histidinol dehydrogenase family. Zn(2+) is required as a cofactor.

The catalysed reaction is L-histidinol + 2 NAD(+) + H2O = L-histidine + 2 NADH + 3 H(+). It participates in amino-acid biosynthesis; L-histidine biosynthesis; L-histidine from 5-phospho-alpha-D-ribose 1-diphosphate: step 9/9. Functionally, catalyzes the sequential NAD-dependent oxidations of L-histidinol to L-histidinaldehyde and then to L-histidine. The sequence is that of Histidinol dehydrogenase from Sulfurimonas denitrificans (strain ATCC 33889 / DSM 1251) (Thiomicrospira denitrificans (strain ATCC 33889 / DSM 1251)).